Reading from the N-terminus, the 183-residue chain is Ubiquitin carboxyl-terminal hydrolase 17-like protein 23 (183 aa).

Positions 80–183 (AGLQNMGNTC…KACLPGHKQV (104 aa)) constitute a USP domain.

This sequence belongs to the peptidase C19 family. USP17 subfamily.

Its subcellular location is the nucleus. It is found in the endoplasmic reticulum. This is Ubiquitin carboxyl-terminal hydrolase 17-like protein 23 (USP17L23) from Homo sapiens (Human).